Consider the following 299-residue polypeptide: tRNA-cytidine(32) 2-sulfurtransferase (299 aa).

A PP-loop motif motif is present at residues 49 to 54 (SGGKDS). Residues cysteine 124, cysteine 127, and cysteine 215 each contribute to the [4Fe-4S] cluster site.

It belongs to the TtcA family. As to quaternary structure, homodimer. It depends on Mg(2+) as a cofactor. [4Fe-4S] cluster is required as a cofactor.

It is found in the cytoplasm. It carries out the reaction cytidine(32) in tRNA + S-sulfanyl-L-cysteinyl-[cysteine desulfurase] + AH2 + ATP = 2-thiocytidine(32) in tRNA + L-cysteinyl-[cysteine desulfurase] + A + AMP + diphosphate + H(+). Its pathway is tRNA modification. In terms of biological role, catalyzes the ATP-dependent 2-thiolation of cytidine in position 32 of tRNA, to form 2-thiocytidine (s(2)C32). The sulfur atoms are provided by the cysteine/cysteine desulfurase (IscS) system. This Deinococcus radiodurans (strain ATCC 13939 / DSM 20539 / JCM 16871 / CCUG 27074 / LMG 4051 / NBRC 15346 / NCIMB 9279 / VKM B-1422 / R1) protein is tRNA-cytidine(32) 2-sulfurtransferase.